The primary structure comprises 60 residues: Large ribosomal subunit protein bL32 (60 aa).

The span at 1-16 (MAVPKRKTTPSKRGMR) shows a compositional bias: basic residues. A disordered region spans residues 1 to 34 (MAVPKRKTTPSKRGMRRAHDALSSPVYIEDKDSG).

It belongs to the bacterial ribosomal protein bL32 family.

In Maricaulis maris (strain MCS10) (Caulobacter maris), this protein is Large ribosomal subunit protein bL32.